Reading from the N-terminus, the 191-residue chain is Protein GrpE (191 aa).

Basic and acidic residues predominate over residues 1-13 (MSEKKNKKEKLAE). Positions 1 to 40 (MSEKKNKKEKLAEEIEQEELNSLDESVETVEEEATEETLT) are disordered. Positions 14–40 (EIEQEELNSLDESVETVEEEATEETLT) are enriched in acidic residues.

It belongs to the GrpE family. Homodimer.

It is found in the cytoplasm. Functionally, participates actively in the response to hyperosmotic and heat shock by preventing the aggregation of stress-denatured proteins, in association with DnaK and GrpE. It is the nucleotide exchange factor for DnaK and may function as a thermosensor. Unfolded proteins bind initially to DnaJ; upon interaction with the DnaJ-bound protein, DnaK hydrolyzes its bound ATP, resulting in the formation of a stable complex. GrpE releases ADP from DnaK; ATP binding to DnaK triggers the release of the substrate protein, thus completing the reaction cycle. Several rounds of ATP-dependent interactions between DnaJ, DnaK and GrpE are required for fully efficient folding. This Listeria innocua serovar 6a (strain ATCC BAA-680 / CLIP 11262) protein is Protein GrpE.